An 885-amino-acid chain; its full sequence is Alanine--tRNA ligase (885 aa).

Zn(2+) is bound by residues His-574, His-578, Cys-685, and His-689.

This sequence belongs to the class-II aminoacyl-tRNA synthetase family. Zn(2+) is required as a cofactor.

It localises to the cytoplasm. It catalyses the reaction tRNA(Ala) + L-alanine + ATP = L-alanyl-tRNA(Ala) + AMP + diphosphate. Its function is as follows. Catalyzes the attachment of alanine to tRNA(Ala) in a two-step reaction: alanine is first activated by ATP to form Ala-AMP and then transferred to the acceptor end of tRNA(Ala). Also edits incorrectly charged Ser-tRNA(Ala) and Gly-tRNA(Ala) via its editing domain. This chain is Alanine--tRNA ligase, found in Deinococcus geothermalis (strain DSM 11300 / CIP 105573 / AG-3a).